A 643-amino-acid polypeptide reads, in one-letter code: Threonine--tRNA ligase (643 aa).

The 61-residue stretch at 1-61 (MPIITLPDGS…SEDATLEIIT (61 aa)) folds into the TGS domain. The catalytic stretch occupies residues 243–534 (DHRKIGKALD…ITEEYAGFFP (292 aa)). Positions 334, 385, and 511 each coordinate Zn(2+).

Belongs to the class-II aminoacyl-tRNA synthetase family. Homodimer. Zn(2+) is required as a cofactor.

It is found in the cytoplasm. It catalyses the reaction tRNA(Thr) + L-threonine + ATP = L-threonyl-tRNA(Thr) + AMP + diphosphate + H(+). Its function is as follows. Catalyzes the attachment of threonine to tRNA(Thr) in a two-step reaction: L-threonine is first activated by ATP to form Thr-AMP and then transferred to the acceptor end of tRNA(Thr). Also edits incorrectly charged L-seryl-tRNA(Thr). The sequence is that of Threonine--tRNA ligase from Glaesserella parasuis serovar 5 (strain SH0165) (Haemophilus parasuis).